The following is a 310-amino-acid chain: Methionyl-tRNA formyltransferase (310 aa).

Residue Ser-109–Pro-112 coordinates (6S)-5,6,7,8-tetrahydrofolate.

The protein belongs to the Fmt family.

The catalysed reaction is L-methionyl-tRNA(fMet) + (6R)-10-formyltetrahydrofolate = N-formyl-L-methionyl-tRNA(fMet) + (6S)-5,6,7,8-tetrahydrofolate + H(+). In terms of biological role, attaches a formyl group to the free amino group of methionyl-tRNA(fMet). The formyl group appears to play a dual role in the initiator identity of N-formylmethionyl-tRNA by promoting its recognition by IF2 and preventing the misappropriation of this tRNA by the elongation apparatus. The sequence is that of Methionyl-tRNA formyltransferase from Pseudomonas entomophila (strain L48).